The sequence spans 691 residues: Elongation factor G (691 aa).

The region spanning 8–282 (ERVRNIGIAA…AVVDYLPAPV (275 aa)) is the tr-type G domain. GTP contacts are provided by residues 17 to 24 (AHIDAGKT), 81 to 85 (DTPGH), and 135 to 138 (NKMD).

This sequence belongs to the TRAFAC class translation factor GTPase superfamily. Classic translation factor GTPase family. EF-G/EF-2 subfamily.

It is found in the cytoplasm. Its function is as follows. Catalyzes the GTP-dependent ribosomal translocation step during translation elongation. During this step, the ribosome changes from the pre-translocational (PRE) to the post-translocational (POST) state as the newly formed A-site-bound peptidyl-tRNA and P-site-bound deacylated tRNA move to the P and E sites, respectively. Catalyzes the coordinated movement of the two tRNA molecules, the mRNA and conformational changes in the ribosome. The chain is Elongation factor G from Prochlorococcus marinus (strain MIT 9515).